We begin with the raw amino-acid sequence, 234 residues long: MSLLAQLDQRIRHHGGLIVSCQPVPGSPLDNPAIVAAMALAAEQAGAVALRIEGLANLQAVRPLVTVPVIGLIKRDLPDSPVRITPWLEDIDALAQGGADIIAIDGTQRQRPASVSALLAEIHQLGKVAMADCSSLDDALECWQLGAEIVGTTLSGYTAEETPDEPDLALVQCLSVAGCRVIAEGRYNTPAQAAEAMRCGAWAVTVGSAITRLEHICGWYNTALKAAVCPANEQ.

It belongs to the NanE family.

It carries out the reaction an N-acyl-D-glucosamine 6-phosphate = an N-acyl-D-mannosamine 6-phosphate. The protein operates within amino-sugar metabolism; N-acetylneuraminate degradation; D-fructose 6-phosphate from N-acetylneuraminate: step 3/5. Converts N-acetylmannosamine-6-phosphate (ManNAc-6-P) to N-acetylglucosamine-6-phosphate (GlcNAc-6-P). The sequence is that of Putative N-acetylmannosamine-6-phosphate 2-epimerase from Klebsiella pneumoniae subsp. pneumoniae (strain ATCC 700721 / MGH 78578).